The sequence spans 307 residues: UDP-N-acetylenolpyruvoylglucosamine reductase (307 aa).

The FAD-binding PCMH-type domain maps to 34-198; that stretch reads TGGNADFYLS…LEAAFTLEPG (165 aa). The active site involves arginine 177. Serine 227 functions as the Proton donor in the catalytic mechanism. Glutamate 297 is an active-site residue.

The protein belongs to the MurB family. It depends on FAD as a cofactor.

The protein localises to the cytoplasm. It catalyses the reaction UDP-N-acetyl-alpha-D-muramate + NADP(+) = UDP-N-acetyl-3-O-(1-carboxyvinyl)-alpha-D-glucosamine + NADPH + H(+). It participates in cell wall biogenesis; peptidoglycan biosynthesis. Cell wall formation. This is UDP-N-acetylenolpyruvoylglucosamine reductase from Staphylococcus haemolyticus (strain JCSC1435).